The sequence spans 539 residues: Glutathione synthetase, chloroplastic (539 aa).

Residues 1 to 61 constitute a chloroplast transit peptide; the sequence is MGSGCSSLSY…SPLRCGRSFK (61 aa). Arg-193 lines the substrate pocket. Glu-209 provides a ligand contact to ATP. 2 residues coordinate Mg(2+): Glu-209 and Asn-211. Residues 213–216, 281–283, Gln-287, and 335–338 each bind substrate; these read ISCS, ERN, and RSGY. ATP contacts are provided by residues Lys-374, 428–437, Tyr-439, 464–467, and Glu-490; these read KPQREGGGNN and MQRI. Glu-432 contributes to the Mg(2+) binding site. Position 515 (Arg-515) interacts with substrate. ATP is bound by residues Lys-517 and Glu-523. 526-527 is a substrate binding site; the sequence is VA.

It belongs to the eukaryotic GSH synthase family. As to quaternary structure, homodimer. Requires Mg(2+) as cofactor.

Its subcellular location is the plastid. It localises to the chloroplast. The catalysed reaction is gamma-L-glutamyl-L-cysteine + glycine + ATP = glutathione + ADP + phosphate + H(+). The protein operates within sulfur metabolism; glutathione biosynthesis; glutathione from L-cysteine and L-glutamate: step 2/2. The protein is Glutathione synthetase, chloroplastic (GSH2) of Arabidopsis thaliana (Mouse-ear cress).